Consider the following 269-residue polypeptide: Sulfur carrier protein FdhD (269 aa).

Cysteine 111 acts as the Cysteine persulfide intermediate in catalysis.

It belongs to the FdhD family.

The protein localises to the cytoplasm. In terms of biological role, required for formate dehydrogenase (FDH) activity. Acts as a sulfur carrier protein that transfers sulfur from IscS to the molybdenum cofactor prior to its insertion into FDH. The protein is Sulfur carrier protein FdhD of Brucella melitensis biotype 1 (strain ATCC 23456 / CCUG 17765 / NCTC 10094 / 16M).